A 521-amino-acid polypeptide reads, in one-letter code: (+)-kolavenyl diphosphate synthase (521 aa).

Positions 311 and 313 each coordinate Mg(2+). The short motif at 311–314 (DGDD) is the DXDD motif element.

The protein belongs to the terpene synthase family. Requires Mg(2+) as cofactor.

The enzyme catalyses (2E,6E,10E)-geranylgeranyl diphosphate = (+)-kolavenyl diphosphate. Involved in the biosynthesis of (+)-O-methylkolavelool. Catalyzes the conversion of geranylgeranyl diphosphate into (+)-kolavenyl diphosphate. The polypeptide is (+)-kolavenyl diphosphate synthase (Herpetosiphon aurantiacus (strain ATCC 23779 / DSM 785 / 114-95)).